A 405-amino-acid chain; its full sequence is Phosphopentomutase (405 aa).

The Mn(2+) site is built by Asp-10, Asp-303, His-308, Asp-344, His-345, and His-356.

The protein belongs to the phosphopentomutase family. It depends on Mn(2+) as a cofactor.

The protein resides in the cytoplasm. The enzyme catalyses 2-deoxy-alpha-D-ribose 1-phosphate = 2-deoxy-D-ribose 5-phosphate. The catalysed reaction is alpha-D-ribose 1-phosphate = D-ribose 5-phosphate. The protein operates within carbohydrate degradation; 2-deoxy-D-ribose 1-phosphate degradation; D-glyceraldehyde 3-phosphate and acetaldehyde from 2-deoxy-alpha-D-ribose 1-phosphate: step 1/2. Its function is as follows. Isomerase that catalyzes the conversion of deoxy-ribose 1-phosphate (dRib-1-P) and ribose 1-phosphate (Rib-1-P) to deoxy-ribose 5-phosphate (dRib-5-P) and ribose 5-phosphate (Rib-5-P), respectively. This Shewanella denitrificans (strain OS217 / ATCC BAA-1090 / DSM 15013) protein is Phosphopentomutase.